A 136-amino-acid chain; its full sequence is Large ribosomal subunit protein bL17 (136 aa).

Belongs to the bacterial ribosomal protein bL17 family. In terms of assembly, part of the 50S ribosomal subunit. Contacts protein L32.

The sequence is that of Large ribosomal subunit protein bL17 from Rhodopseudomonas palustris (strain BisA53).